We begin with the raw amino-acid sequence, 318 residues long: Dihydroorotate dehydrogenase B (NAD(+)), catalytic subunit (318 aa).

Residues Ser-19 and 43 to 44 (KT) each bind FMN. Residues Lys-43, 69-73 (NAMGL), and Asn-125 contribute to the substrate site. FMN is bound at residue Asn-125. The active-site Nucleophile is the Cys-128. Residues Lys-164 and Val-192 each contribute to the FMN site. Position 193 to 194 (193 to 194 (NT)) interacts with substrate. Residues Gly-219, 247-248 (GG), and 269-270 (AT) each bind FMN.

The protein belongs to the dihydroorotate dehydrogenase family. Type 1 subfamily. In terms of assembly, heterotetramer of 2 PyrK and 2 PyrD type B subunits. FMN serves as cofactor.

The protein localises to the cytoplasm. The enzyme catalyses (S)-dihydroorotate + NAD(+) = orotate + NADH + H(+). The protein operates within pyrimidine metabolism; UMP biosynthesis via de novo pathway; orotate from (S)-dihydroorotate (NAD(+) route): step 1/1. Catalyzes the conversion of dihydroorotate to orotate with NAD(+) as electron acceptor. The protein is Dihydroorotate dehydrogenase B (NAD(+)), catalytic subunit (pyrD) of Methanopyrus kandleri (strain AV19 / DSM 6324 / JCM 9639 / NBRC 100938).